Reading from the N-terminus, the 432-residue chain is RNA exonuclease 4 (432 aa).

Over residues A42–K54 the composition is skewed to basic residues. Residues A42–S177 are disordered. Residues K121–K137 are compositionally biased toward basic and acidic residues. S123 carries the post-translational modification Phosphoserine. K127 is covalently cross-linked (Glycyl lysine isopeptide (Lys-Gly) (interchain with G-Cter in SUMO2)). An Exonuclease domain is found at K230–I381.

It belongs to the REXO4 family. As to quaternary structure, can bind ESR1 and ESR2. This interaction is abrogated by estrogen and augmented by tamoxifen treatment.

The protein resides in the nucleus. It is found in the nucleolus. In terms of biological role, may function as an exonuclease. The chain is RNA exonuclease 4 (Rexo4) from Mus musculus (Mouse).